The following is a 174-amino-acid chain: NADH-ubiquinone oxidoreductase chain 6 (174 aa).

Transmembrane regions (helical) follow at residues 24–44 (LALG…SGLM), 53–73 (ILFL…TSLA), 82–102 (IKLT…SMIL), and 143–163 (FVTI…VKIT).

Belongs to the complex I subunit 6 family.

Its subcellular location is the mitochondrion membrane. It catalyses the reaction a ubiquinone + NADH + 5 H(+)(in) = a ubiquinol + NAD(+) + 4 H(+)(out). In terms of biological role, core subunit of the mitochondrial membrane respiratory chain NADH dehydrogenase (Complex I) that is believed to belong to the minimal assembly required for catalysis. Complex I functions in the transfer of electrons from NADH to the respiratory chain. The immediate electron acceptor for the enzyme is believed to be ubiquinone. The sequence is that of NADH-ubiquinone oxidoreductase chain 6 (mt:ND6) from Drosophila yakuba (Fruit fly).